Consider the following 1723-residue polypeptide: Lymphocyte antigen 75 (1723 aa).

Positions methionine 1–proline 27 are cleaved as a signal peptide. Residues serine 28–aspartate 1667 lie on the Extracellular side of the membrane. Residues asparagine 33 to aspartate 182 enclose the Ricin B-type lectin domain. Asparagine 135 is a glycosylation site (N-linked (GlcNAc...) asparagine). In terms of domain architecture, Fibronectin type-II spans serine 164–leucine 211. Cystine bridges form between cysteine 169/cysteine 194, cysteine 183/cysteine 209, cysteine 247/cysteine 340, and cysteine 317/cysteine 332. Residues glutamine 225–lysine 341 enclose the C-type lectin 1 domain. 2 N-linked (GlcNAc...) asparagine glycosylation sites follow: asparagine 345 and asparagine 377. 3 consecutive C-type lectin domains span residues asparagine 368–lysine 486, lysine 493–lysine 625, and serine 652–glutamine 791. Disulfide bonds link cysteine 389–cysteine 485 and cysteine 462–cysteine 477. The N-linked (GlcNAc...) asparagine glycan is linked to asparagine 529. Disulfide bonds link cysteine 597-cysteine 614, cysteine 678-cysteine 790, and cysteine 752-cysteine 782. Residues asparagine 843 and asparagine 865 are each glycosylated (N-linked (GlcNAc...) asparagine). Phosphotyrosine is present on tyrosine 934. Residues asparagine 935, asparagine 1077, and asparagine 1104 are each glycosylated (N-linked (GlcNAc...) asparagine). In terms of domain architecture, C-type lectin 5 spans phenylalanine 959–lysine 1092. A disulfide bridge links cysteine 1061 with cysteine 1081. Positions tyrosine 1111–tyrosine 1223 constitute a C-type lectin 6 domain. An intrachain disulfide couples cysteine 1198 to cysteine 1212. Asparagine 1226, asparagine 1321, and asparagine 1393 each carry an N-linked (GlcNAc...) asparagine glycan. One can recognise a C-type lectin 7 domain in the interval phenylalanine 1252–glutamine 1375. 2 consecutive C-type lectin domains span residues tyrosine 1402 to lysine 1514 and tyrosine 1543 to isoleucine 1662. A disulfide bridge links cysteine 1489 with cysteine 1503. N-linked (GlcNAc...) asparagine glycans are attached at residues asparagine 1594 and asparagine 1627. Residues cysteine 1636 and cysteine 1651 are joined by a disulfide bond. Residues tyrosine 1668–leucine 1692 form a helical membrane-spanning segment. Residues glutamine 1693–aspartate 1723 lie on the Cytoplasmic side of the membrane. 2 positions are modified to phosphoserine: serine 1704 and serine 1720.

In terms of processing, N-glycosylated. In terms of tissue distribution, expressed in dendritic and thymic epithelial cells and lymph nodes.

The protein localises to the membrane. In terms of biological role, acts as an endocytic receptor to direct captured antigens from the extracellular space to a specialized antigen-processing compartment. Causes reduced proliferation of B lymphocytes. The polypeptide is Lymphocyte antigen 75 (Ly75) (Mus musculus (Mouse)).